The sequence spans 484 residues: Glutamate--tRNA ligase (484 aa).

The 'HIGH' region signature appears at 11–21 (PSPTGYLHIGN). A 'KMSKS' region motif is present at residues 252–256 (KLSKR). Lys255 contacts ATP.

It belongs to the class-I aminoacyl-tRNA synthetase family. Glutamate--tRNA ligase type 1 subfamily. As to quaternary structure, monomer.

The protein resides in the cytoplasm. It catalyses the reaction tRNA(Glu) + L-glutamate + ATP = L-glutamyl-tRNA(Glu) + AMP + diphosphate. Catalyzes the attachment of glutamate to tRNA(Glu) in a two-step reaction: glutamate is first activated by ATP to form Glu-AMP and then transferred to the acceptor end of tRNA(Glu). This is Glutamate--tRNA ligase from Staphylococcus haemolyticus (strain JCSC1435).